The primary structure comprises 337 residues: tRNA N6-adenosine threonylcarbamoyltransferase (337 aa).

His-110 and His-114 together coordinate Fe cation. Residues 133–137 (LVSGK), Asp-166, Gly-179, and Asn-271 each bind substrate. Residue Asp-300 coordinates Fe cation.

This sequence belongs to the KAE1 / TsaD family. It depends on Fe(2+) as a cofactor.

It is found in the cytoplasm. The enzyme catalyses L-threonylcarbamoyladenylate + adenosine(37) in tRNA = N(6)-L-threonylcarbamoyladenosine(37) in tRNA + AMP + H(+). In terms of biological role, required for the formation of a threonylcarbamoyl group on adenosine at position 37 (t(6)A37) in tRNAs that read codons beginning with adenine. Is involved in the transfer of the threonylcarbamoyl moiety of threonylcarbamoyl-AMP (TC-AMP) to the N6 group of A37, together with TsaE and TsaB. TsaD likely plays a direct catalytic role in this reaction. The sequence is that of tRNA N6-adenosine threonylcarbamoyltransferase from Buchnera aphidicola subsp. Schizaphis graminum (strain Sg).